Consider the following 573-residue polypeptide: Urease subunit alpha 2 (573 aa).

One can recognise a Urease domain in the interval 135–573 (GGMDTHVHYI…ISLNQLYFFS (439 aa)). Residues His-140, His-142, and Lys-223 each coordinate Ni(2+). Lys-223 carries the N6-carboxylysine modification. A substrate-binding site is contributed by His-225. His-252 and His-278 together coordinate Ni(2+). His-326 (proton donor) is an active-site residue. Ni(2+) is bound at residue Asp-366.

The protein belongs to the metallo-dependent hydrolases superfamily. Urease alpha subunit family. As to quaternary structure, heterotrimer of UreA (gamma), UreB (beta) and UreC (alpha) subunits. Three heterotrimers associate to form the active enzyme. The cofactor is Ni cation. In terms of processing, carboxylation allows a single lysine to coordinate two nickel ions.

The protein localises to the cytoplasm. The enzyme catalyses urea + 2 H2O + H(+) = hydrogencarbonate + 2 NH4(+). Its pathway is nitrogen metabolism; urea degradation; CO(2) and NH(3) from urea (urease route): step 1/1. Its function is as follows. Disrupting the ure2 operon has no effect on urease activity or pathogen survival in BALB/c mice when administered orally. In Brucella abortus (strain 2308), this protein is Urease subunit alpha 2.